Reading from the N-terminus, the 1258-residue chain is Cohesin subunit SA-1 (1258 aa).

The interval 1 to 84 (MITSELPVLQ…HPQQNGEGEP (84 aa)) is disordered. The span at 10–19 (QDSTNETTAH) shows a compositional bias: polar residues. A Phosphoserine modification is found at serine 24. The segment covering 53 to 62 (SPGEKSRIEA) has biased composition (basic and acidic residues). The SCD domain maps to 296–381 (FVHRYRDAIA…NRFKDRIVSM (86 aa)). 3 positions are modified to phosphoserine: serine 756, serine 1062, and serine 1065. Disordered regions lie at residues 1055–1096 (GGED…SLDN) and 1129–1148 (MGDQ…DFLH). A compositionally biased stretch (low complexity) spans 1062–1074 (SVNSGSSSSKTSS). Positions 1076–1087 (RNKKGRPPLHKK) are enriched in basic residues. Phosphoserine is present on serine 1093. Residues 1137–1146 (ESEHGSEPDF) are compositionally biased toward basic and acidic residues. Lysine 1161 is covalently cross-linked (Glycyl lysine isopeptide (Lys-Gly) (interchain with G-Cter in SUMO2)).

This sequence belongs to the SCC3 family. Cohesin complexes are composed of a heterodimer between a SMC1 protein (SMC1A or SMC1B) and SMC3, which are attached via their hinge domain, and RAD21 which link them at their heads, and one STAG protein (STAG1, STAG2 or STAG3). In cohesin complexes, STAG1 is mutually exclusive with STAG2 and STAG3. Interacts directly with RAD21 in cohesin complex. The cohesin complex interacts with the cohesin loading complex subunits NIPBL/Scc2 (via HEAT repeats) and MAU2/Scc4. NIPBL directly contacts all members of the complex, RAD21, SMC1A/B, SMC3 and STAG1. Post-translationally, phosphorylated by PLK1. The large dissociation of cohesin from chromosome arms during prophase is partly due to its phosphorylation.

It is found in the nucleus. It localises to the chromosome. The protein localises to the centromere. Functionally, component of cohesin complex, a complex required for the cohesion of sister chromatids after DNA replication. The cohesin complex apparently forms a large proteinaceous ring within which sister chromatids can be trapped. At anaphase, the complex is cleaved and dissociates from chromatin, allowing sister chromatids to segregate. The cohesin complex may also play a role in spindle pole assembly during mitosis. In Homo sapiens (Human), this protein is Cohesin subunit SA-1 (STAG1).